The following is a 298-amino-acid chain: Putative ankyrin repeat-containing protein TP_0502 (298 aa).

ANK repeat units follow at residues 143–172, 176–205, 210–239, and 243–272; these read CFEE…SAAL, RGTP…PVDQ, RAYS…DPNV, and NGQT…NPYL.

This is Putative ankyrin repeat-containing protein TP_0502 from Treponema pallidum (strain Nichols).